The following is a 952-amino-acid chain: Inter-alpha-trypsin inhibitor heavy chain H5 (952 aa).

A signal peptide spans 1-17 (MLLLLGLCLGLPLFSES). One can recognise a VIT domain in the interval 35-161 (VPRQLRLLQR…KAAFFLSYEE (127 aa)). Residues N97, N127, N136, and N231 are each glycosylated (N-linked (GlcNAc...) asparagine). Positions 113–131 (QKDKKSSESVKDKRNRTSD) are enriched in basic and acidic residues. A disordered region spans residues 113 to 138 (QKDKKSSESVKDKRNRTSDDNEENGS). The 184-residue stretch at 295-478 (NVVFVLDISA…AQLIGFYDEI (184 aa)) folds into the VWFA domain. N508, N776, N795, and N862 each carry an N-linked (GlcNAc...) asparagine glycan. The segment at 933–952 (ALGLSTPRKPETDRPHEESV) is disordered. A compositionally biased stretch (basic and acidic residues) spans 940-952 (RKPETDRPHEESV).

It belongs to the ITIH family.

It localises to the secreted. Functionally, may act as a tumor suppressor. In Mus musculus (Mouse), this protein is Inter-alpha-trypsin inhibitor heavy chain H5 (Itih5).